A 345-amino-acid polypeptide reads, in one-letter code: Ryncolin-1 (345 aa).

Residues 1–19 (MKPWAAFHLIFLVASSLEG) form the signal peptide. Positions 48-118 (ILQSQPGIPG…DKGDKGEDCN (71 aa)) are disordered. The Collagen-like domain maps to 57–114 (GIPGVPGTNGSEGLKGDPGPQGPPGIRGPDGIRGEAGPKGDKGDQGDKGDKGDKGDKG). Positions 86–116 (DGIRGEAGPKGDKGDQGDKGDKGDKGDKGED) are enriched in basic and acidic residues. The region spanning 121 to 339 (GCLPTEVRNC…YADMKIRPQQ (219 aa)) is the Fibrinogen C-terminal domain. Intrachain disulfides connect Cys-130-Cys-158 and Cys-282-Cys-295.

It belongs to the ficolin lectin family. Veficolin subfamily. In terms of processing, hydroxylated, possibly at Pro-80. As to expression, expressed by the venom duct.

Its subcellular location is the secreted. Functionally, initiates complement activation and/or interferes in platelet aggregation and/or blood coagulation. This Cerberus rynchops (Dog-faced water snake) protein is Ryncolin-1.